The chain runs to 331 residues: MMNHNQIIYTIIIGFIITLILGPLTIPFLRRLKVGQTIREEGPKTHMAKSGTPTIGGIILIMSIIITSLTSGLINEELWIALAATVAFGIIGFIDDFIKVILKRNLGLRAYQKLILQGTIAVILAIYQSRTSIMGTEVIVPFVGEGITIAGFTITQTIDLGILYIPFIVFVVVATVNSVNLTDGLDGLAAGVTLIIAAFFALVAMSWGYVSLAIFAAAITGACLGFLKFNSHPAQVFMGDTGSLALGGAIATIAVLMNVVLIIPIVGGIYFAEAVSVILQVISFKLTGKRIFKMSPLHHHYELSGWAETKVVIVFWVVTVILCLVGMLALS.

9 consecutive transmembrane segments (helical) span residues 7–27, 54–74, 78–98, 106–126, 133–153, 154–174, 195–215, 249–269, and 311–331; these read IIYT…LTIP, TIGG…SGLI, LWIA…DDFI, LGLR…ILAI, IMGT…AGFT, ITQT…VVVA, IIAA…LAIF, AIAT…VGGI, and VVIV…LALS.

Belongs to the glycosyltransferase 4 family. MraY subfamily. The cofactor is Mg(2+).

The protein localises to the cell membrane. It catalyses the reaction UDP-N-acetyl-alpha-D-muramoyl-L-alanyl-gamma-D-glutamyl-meso-2,6-diaminopimeloyl-D-alanyl-D-alanine + di-trans,octa-cis-undecaprenyl phosphate = di-trans,octa-cis-undecaprenyl diphospho-N-acetyl-alpha-D-muramoyl-L-alanyl-D-glutamyl-meso-2,6-diaminopimeloyl-D-alanyl-D-alanine + UMP. It participates in cell wall biogenesis; peptidoglycan biosynthesis. Catalyzes the initial step of the lipid cycle reactions in the biosynthesis of the cell wall peptidoglycan: transfers peptidoglycan precursor phospho-MurNAc-pentapeptide from UDP-MurNAc-pentapeptide onto the lipid carrier undecaprenyl phosphate, yielding undecaprenyl-pyrophosphoryl-MurNAc-pentapeptide, known as lipid I. The polypeptide is Phospho-N-acetylmuramoyl-pentapeptide-transferase (Alkaliphilus metalliredigens (strain QYMF)).